A 1179-amino-acid chain; its full sequence is Putative ankyrin repeat protein RF_0381 (1179 aa).

18 ANK repeats span residues asparagine 282–glutamine 311, asparagine 604–alanine 633, histidine 637–alanine 666, asparagine 670–alanine 699, asparagine 703–alanine 732, asparagine 736–alanine 765, serine 769–alanine 798, asparagine 802–asparagine 831, lysine 833–alanine 860, serine 864–alanine 893, serine 897–alanine 926, serine 930–alanine 959, serine 963–threonine 992, aspartate 996–alanine 1025, serine 1029–alanine 1058, aspartate 1062–alanine 1091, serine 1095–threonine 1124, and serine 1128–leucine 1157.

In Rickettsia felis (strain ATCC VR-1525 / URRWXCal2) (Rickettsia azadi), this protein is Putative ankyrin repeat protein RF_0381.